The following is a 421-amino-acid chain: Zinc chaperone AztD (421 aa).

A signal peptide spans 1–29 (MMENIMKKRLLSTSISTLLLGLSVMPAFA). Zn(2+) is bound by residues His101, His104, Asp106, His126, His169, His216, and His405. An intrachain disulfide couples Cys212 to Cys229. Residues 399-421 (GGSGKVHGEHHDHEAHHHDDHAH) are disordered. Residues 404–421 (VHGEHHDHEAHHHDDHAH) show a composition bias toward basic and acidic residues. The N-terminal Zn(2+)-binding motif; binds a third Zn(2+) with low affinity motif lies at 408 to 419 (HHDHEAHHHDDH).

As to quaternary structure, monomer.

It is found in the periplasm. Functionally, acts as a zinc chaperone in the AztABCD zinc transport system. Directly transfers one zinc cation to the solute binding protein AztC; the transfer occurs without the formation of a stable interaction. Binds 3 Zn(2+), two with high affinity and one with low affinity, and transfers only Zn(2+) bound to site 2 to AztC. The polypeptide is Zinc chaperone AztD (Citrobacter koseri (strain ATCC BAA-895 / CDC 4225-83 / SGSC4696)).